The sequence spans 153 residues: SsrA-binding protein (153 aa).

This sequence belongs to the SmpB family.

The protein localises to the cytoplasm. In terms of biological role, required for rescue of stalled ribosomes mediated by trans-translation. Binds to transfer-messenger RNA (tmRNA), required for stable association of tmRNA with ribosomes. tmRNA and SmpB together mimic tRNA shape, replacing the anticodon stem-loop with SmpB. tmRNA is encoded by the ssrA gene; the 2 termini fold to resemble tRNA(Ala) and it encodes a 'tag peptide', a short internal open reading frame. During trans-translation Ala-aminoacylated tmRNA acts like a tRNA, entering the A-site of stalled ribosomes, displacing the stalled mRNA. The ribosome then switches to translate the ORF on the tmRNA; the nascent peptide is terminated with the 'tag peptide' encoded by the tmRNA and targeted for degradation. The ribosome is freed to recommence translation, which seems to be the essential function of trans-translation. The chain is SsrA-binding protein from Pelotomaculum thermopropionicum (strain DSM 13744 / JCM 10971 / SI).